The chain runs to 155 residues: Ribosomal RNA large subunit methyltransferase H (155 aa).

S-adenosyl-L-methionine is bound by residues leucine 73, glycine 104, and 123–128 (LSPLTL).

This sequence belongs to the RNA methyltransferase RlmH family. In terms of assembly, homodimer.

Its subcellular location is the cytoplasm. The catalysed reaction is pseudouridine(1915) in 23S rRNA + S-adenosyl-L-methionine = N(3)-methylpseudouridine(1915) in 23S rRNA + S-adenosyl-L-homocysteine + H(+). Its function is as follows. Specifically methylates the pseudouridine at position 1915 (m3Psi1915) in 23S rRNA. The polypeptide is Ribosomal RNA large subunit methyltransferase H (Ectopseudomonas mendocina (strain ymp) (Pseudomonas mendocina)).